We begin with the raw amino-acid sequence, 94 residues long: Large ribosomal subunit protein eL33 (94 aa).

Belongs to the eukaryotic ribosomal protein eL33 family.

This Aeropyrum pernix (strain ATCC 700893 / DSM 11879 / JCM 9820 / NBRC 100138 / K1) protein is Large ribosomal subunit protein eL33.